A 902-amino-acid chain; its full sequence is Nuclear factor of activated T-cells, cytoplasmic 4 (902 aa).

Disordered stretches follow at residues 16 to 180 (VFGE…SSWS) and 208 to 369 (RFGL…GGSR). A compositionally biased stretch (pro residues) spans 50 to 81 (EPPPYGAAPIGIPRPPPPRPGMHSPPPRPAPS). Gly residues predominate over residues 96–109 (GGPGGGAGGAGGGR). The interval 114-119 (PSIRIT) is calcineurin-binding. A compositionally biased stretch (gly residues) spans 151–165 (GFGGYREAGGQGGGA). Positions 166–180 (FFSPSPGSSSLSSWS) are enriched in low complexity. 2 positions are modified to phosphoserine; by MAPK7 and MAPK14: Ser-168 and Ser-170. A phosphoserine; by MAPK8 and MAPK9 mark is found at Ser-213 and Ser-217. One copy of the SP 1 repeat lies at 213–229 (SPLPSPRASPRPWTPED). Residues 213-293 (SPLPSPRASP…LSRRGSLGEE (81 aa)) are 2 approximate SP repeats. Composition is skewed to pro residues over residues 215-227 (LPSP…PWTP) and 254-263 (GPTPASPRPA). Residues 268–270 (KRR) carry the Nuclear localization signal motif. The segment covering 272 to 288 (SSSGTPSSASPALSRRG) has biased composition (low complexity). Residues 277–293 (PSSASPALSRRGSLGEE) form an SP 2; approximate repeat. Phosphoserine; by RPS6KA3 occurs at positions 289 and 344. Residues 401-582 (SALPPLDWPL…VPIECSQRSA (182 aa)) enclose the RHD domain. A DNA-binding region spans residues 430 to 437 (RAHYETEG). The IPT/TIG domain occupies 586–683 (PQVEAYSPSA…KRSPTQSFRF (98 aa)). Positions 672 to 674 (RRK) match the Nuclear localization signal motif. A Glycyl lysine isopeptide (Lys-Gly) (interchain with G-Cter in SUMO2) cross-link involves residue Lys-689. The segment at 791-870 (PYGGRGSSFS…GGYSSGFRDS (80 aa)) is disordered. Positions 805 to 824 (FSPPAPFRPPPLPASPPLEG) are enriched in pro residues.

As to quaternary structure, member of the multicomponent NFATC transcription complex that consists of at least two components, a pre-existing cytoplasmic component NFATC2 and an inducible nuclear component NFATC1. Other NFAT proteins, such as NFATC3, or members of the activating protein-1 (AP-1) family and MAF can also bind the complex. NFAT proteins can bind DNA as monomers or dimers. Component of a promoter-binding complex composed of STAT3, NFATC3 and NFATC4; complex formation is enhanced by calcineurin. Interacts with CREBBP; this interaction potentiates transcription activation. Interacts with MAPK8/JNK1 and MAPK9/JNK2. Interacts with GATA4 (via the second Zn finger). Interacts (via N-terminus) with IRAK1 (via C-terminus). Interacts with RPS6KA3. Interacts with HOMER1, HOMER2 and HOMER3; this interaction competes with calcineurin/PPP3CA-binding and hence prevents NFATC4 dephosphorylation and activation. Interacts with ESR1 and ESR2; this interaction decreases NFATC4 transcriptional activity. Interacts with MTOR and MAPK7/ERK5. Interacts with TRIM17; this interaction prevents NFATC3 nuclear localization. Interacts with TCF25 (via C-terminus); the interaction leads to suppression of NFATC4 transcription factor activity and is reduced following stimulation with angiotensin-2. In terms of processing, phosphorylated by NFATC-kinases; dephosphorylated by calcineurin/PPP3CA. Phosphorylated on Ser-168 and Ser-170 by MTOR, IRAK1, MAPK7/ERK5 and MAPK14/p38, on Ser-213 and Ser-217 by MAPK8/JNK1 and MAPK9/JNK2, and on Ser-289 and Ser-344 by RPS6KA3. Phosphorylated by GSK3B. Phosphorylation by GSK3B markedly increases NFATC4 ubiquitination. Phosphorylation at Ser-168 and Ser-170 is stimulated by UV irradiation. Phosphorylation determines subcellular location: the hyperphosphorylated protein is cytosolic, while the dephosphorylated form is targeted to the nucleus. Ubiquitinated, leading to degradation by the proteasome. Ubiquitination may be stimulated by GSK3B-dependent phosphorylation. Polyubiquitin linkage mainly occurs through 'Lys-48'. Widely expressed, with high levels in placenta, lung, kidney, testis and ovary. Weakly expressed in spleen and thymus. In the hippocampus, expressed in the granular layer of the dentate gyrus, in the pyramidal neurons of CA3 region, and in the hippocampal fissure. Expressed in the heart (at protein level).

It is found in the cytoplasm. The protein localises to the nucleus. Transcriptional activity may be repressed by ESR1 and ESR2. Its function is as follows. Ca(2+)-regulated transcription factor that is involved in several processes, including the development and function of the immune, cardiovascular, musculoskeletal, and nervous systems. Involved in T-cell activation, stimulating the transcription of cytokine genes, including that of IL2 and IL4. Along with NFATC3, involved in embryonic heart development. Following JAK/STAT signaling activation and as part of a complex with NFATC3 and STAT3, binds to the alpha-beta E4 promoter region of CRYAB and activates transcription in cardiomyocytes. Involved in mitochondrial energy metabolism required for cardiac morphogenesis and function. Transactivates many genes involved in the cardiovascular system, including AGTR2, NPPB/BNP (in synergy with GATA4), NPPA/ANP/ANF and MYH7/beta-MHC. Involved in the regulation of adult hippocampal neurogenesis. Involved in BDNF-driven pro-survival signaling in hippocampal adult-born neurons. Involved in the formation of long-term spatial memory and long-term potentiation. In cochlear nucleus neurons, may play a role in deafferentation-induced apoptosis during the developmental critical period, when auditory neurons depend on afferent input for survival. Binds to and activates the BACE1/Beta-secretase 1 promoter, hence may regulate the proteolytic processing of the amyloid precursor protein (APP). Plays a role in adipocyte differentiation. May be involved in myoblast differentiation into myotubes. Binds the consensus DNA sequence 5'-GGAAAAT-3'. In the presence of CREBBP, activates TNF transcription. Binds to PPARG gene promoter and regulates its activity. Binds to PPARG and REG3G gene promoters. The protein is Nuclear factor of activated T-cells, cytoplasmic 4 (NFATC4) of Homo sapiens (Human).